A 296-amino-acid polypeptide reads, in one-letter code: Aspartate and glycine-rich protein (296 aa).

Residues Gly1 to Asn77 are compositionally biased toward gly residues. Disordered stretches follow at residues Gly1–Gly219 and Arg233–Tyr296. Composition is skewed to acidic residues over residues Phe80–Asn96 and Asn103–Trp194. The span at Asn198–Asn210 shows a compositional bias: gly residues. The segment covering Arg233–Arg243 has biased composition (low complexity). Over residues Ser244 to Gly259 the composition is skewed to gly residues. Positions Arg270–Asn281 are enriched in low complexity.

Component of the acid-soluble and acid-insoluble organic matrix of calcified shell layers (at protein level).

The protein localises to the secreted. This is Aspartate and glycine-rich protein from Haliotis asinina (Donkey's ear abalone).